The sequence spans 88 residues: Small ribosomal subunit protein uS15c (88 aa).

The protein belongs to the universal ribosomal protein uS15 family. As to quaternary structure, part of the 30S ribosomal subunit.

Its subcellular location is the plastid. It localises to the chloroplast. This is Small ribosomal subunit protein uS15c (rps15) from Lepidium virginicum (Virginia pepperweed).